A 102-amino-acid chain; its full sequence is Small ribosomal subunit protein uS10 (102 aa).

It belongs to the universal ribosomal protein uS10 family. In terms of assembly, part of the 30S ribosomal subunit.

Functionally, involved in the binding of tRNA to the ribosomes. The protein is Small ribosomal subunit protein uS10 of Methanospirillum hungatei JF-1 (strain ATCC 27890 / DSM 864 / NBRC 100397 / JF-1).